The primary structure comprises 149 residues: Probable flagellum biosynthesis repressor protein FlbT (149 aa).

This sequence belongs to the FlbT family.

In terms of biological role, has a post-transcriptional repressor function in flagellum biogenesis. Associates with the 5'-UTR of fljK mRNA and promotes its degradation. The chain is Probable flagellum biosynthesis repressor protein FlbT from Rhizobium etli (strain ATCC 51251 / DSM 11541 / JCM 21823 / NBRC 15573 / CFN 42).